A 197-amino-acid polypeptide reads, in one-letter code: Ribonuclease HII (197 aa).

One can recognise an RNase H type-2 domain in the interval 14-197 (GIIAGVDEVG…RKNFAPIRIL (184 aa)). Aspartate 20, glutamate 21, and aspartate 112 together coordinate a divalent metal cation.

It belongs to the RNase HII family. Mn(2+) is required as a cofactor. Requires Mg(2+) as cofactor.

The protein resides in the cytoplasm. The enzyme catalyses Endonucleolytic cleavage to 5'-phosphomonoester.. Its function is as follows. Endonuclease that specifically degrades the RNA of RNA-DNA hybrids. In Wolbachia pipientis subsp. Culex pipiens (strain wPip), this protein is Ribonuclease HII.